The primary structure comprises 655 residues: Putative calcium up-regulated protein J (655 aa).

In terms of domain architecture, Ricin B-type lectin spans 40-181; that stretch reads KSRAMLKGDN…DNVCFQWDLE (142 aa).

The protein belongs to the cup family.

This is Putative calcium up-regulated protein J (cupJ) from Dictyostelium discoideum (Social amoeba).